Consider the following 163-residue polypeptide: Neurotrophin-3 (163 aa).

The N-terminal stretch at 1–3 is a signal peptide; that stretch reads IQS. The propeptide occupies 4–119; sequence TSMDQGILTE…VLNRTSRRKR (116 aa). Residue Asn-112 is glycosylated (N-linked (GlcNAc...) asparagine).

This sequence belongs to the NGF-beta family.

It is found in the secreted. Its function is as follows. Seems to promote the survival of visceral and proprioceptive sensory neurons. This Epicrates cenchria (Rainbow boa) protein is Neurotrophin-3 (NTF3).